A 152-amino-acid chain; its full sequence is Transcriptional regulator MraZ (152 aa).

SpoVT-AbrB domains lie at 5 to 52 (ANAI…PLNE) and 81 to 124 (ATES…DEDM).

The protein belongs to the MraZ family. As to quaternary structure, forms oligomers.

The protein resides in the cytoplasm. Its subcellular location is the nucleoid. The chain is Transcriptional regulator MraZ from Psychromonas ingrahamii (strain DSM 17664 / CCUG 51855 / 37).